Reading from the N-terminus, the 249-residue chain is MEHSLIILLFTVLLLLTTTPGILSQPSPAVAPAPPGPTNVTKILEKAGQFTVFIRLLKSTGVANQLYGQLNNSDNGITIFAPSDSSFTGLKAGTLNSLTDEQQVELIQFHVIPSYVSSSNFQTISNPLRTQAGDSADGHFPLNVTTSGNTVNITSGVTNTTVSGNVYSDGQLAVYQVDKVLLPQQVFDPRPPAPAPAPSVSKSKKKKDDSDSSSDDSPADASFALRNVGSVCDAVSFCVMSVMLAWFYL.

The first 24 residues, 1-24, serve as a signal peptide directing secretion; that stretch reads MEHSLIILLFTVLLLLTTTPGILS. In terms of domain architecture, FAS1 spans 37–181; the sequence is PTNVTKILEK…LAVYQVDKVL (145 aa). N-linked (GlcNAc...) asparagine glycans are attached at residues N39, N71, N143, N152, and N159. Residues 186–219 are disordered; the sequence is VFDPRPPAPAPAPSVSKSKKKKDDSDSSSDDSPA. D220 carries GPI-anchor amidated aspartate lipidation. Residues 221–249 constitute a propeptide, removed in mature form; sequence ASFALRNVGSVCDAVSFCVMSVMLAWFYL.

The protein belongs to the fasciclin-like AGP family.

It is found in the cell membrane. May be a cell surface adhesion protein. The protein is Fasciclin-like arabinogalactan protein 12 (FLA12) of Arabidopsis thaliana (Mouse-ear cress).